Reading from the N-terminus, the 128-residue chain is MSRKESRSQAFQALFQLEMENTDLSIDEAINFIKDDYPDLEFDFIYWLVSGVKDHEPVLDEKIQNNLKDWKISRLLKTDRIILRMAAFELANSDTPPKVIINEAVELAKQYSDDDHYRFINGVLSNLN.

This sequence belongs to the NusB family.

Functionally, involved in transcription antitermination. Required for transcription of ribosomal RNA (rRNA) genes. Binds specifically to the boxA antiterminator sequence of the ribosomal RNA (rrn) operons. The protein is Transcription antitermination protein NusB of Staphylococcus carnosus (strain TM300).